We begin with the raw amino-acid sequence, 332 residues long: Biotin synthase (332 aa).

The Radical SAM core domain occupies 53-282; sequence HFGKKVKLNM…TKEIRISGGR (230 aa). [4Fe-4S] cluster is bound by residues cysteine 71, cysteine 75, and cysteine 78. Residues cysteine 115, cysteine 147, cysteine 207, and arginine 277 each coordinate [2Fe-2S] cluster.

It belongs to the radical SAM superfamily. Biotin synthase family. In terms of assembly, homodimer. [4Fe-4S] cluster serves as cofactor. [2Fe-2S] cluster is required as a cofactor.

The enzyme catalyses (4R,5S)-dethiobiotin + (sulfur carrier)-SH + 2 reduced [2Fe-2S]-[ferredoxin] + 2 S-adenosyl-L-methionine = (sulfur carrier)-H + biotin + 2 5'-deoxyadenosine + 2 L-methionine + 2 oxidized [2Fe-2S]-[ferredoxin]. Its pathway is cofactor biosynthesis; biotin biosynthesis; biotin from 7,8-diaminononanoate: step 2/2. Catalyzes the conversion of dethiobiotin (DTB) to biotin by the insertion of a sulfur atom into dethiobiotin via a radical-based mechanism. This Bacillus cereus (strain AH187) protein is Biotin synthase.